The following is a 189-amino-acid chain: UPF0200 protein Smar_1234 (189 aa).

10–17 contacts ATP; that stretch reads GMPGAGKS.

The protein belongs to the UPF0200 family.

The sequence is that of UPF0200 protein Smar_1234 from Staphylothermus marinus (strain ATCC 43588 / DSM 3639 / JCM 9404 / F1).